A 37-amino-acid polypeptide reads, in one-letter code: Cytochrome b6-f complex subunit 5 (37 aa).

A helical transmembrane segment spans residues 5 to 25 (FLFGIVLGLIPITLAGLFVTA).

The protein belongs to the PetG family. In terms of assembly, the 4 large subunits of the cytochrome b6-f complex are cytochrome b6, subunit IV (17 kDa polypeptide, PetD), cytochrome f and the Rieske protein, while the 4 small subunits are PetG, PetL, PetM and PetN. The complex functions as a dimer.

It localises to the plastid. It is found in the chloroplast thylakoid membrane. Its function is as follows. Component of the cytochrome b6-f complex, which mediates electron transfer between photosystem II (PSII) and photosystem I (PSI), cyclic electron flow around PSI, and state transitions. PetG is required for either the stability or assembly of the cytochrome b6-f complex. This Platanus occidentalis (Sycamore) protein is Cytochrome b6-f complex subunit 5.